Consider the following 64-residue polypeptide: Translation machinery-associated protein 7B (64 aa).

Positions 1–38 (MSSHEGGKKKALKQPKKQAKEMDEEEKAFKQKQKEEQK) are disordered. Residues 27 to 38 (KAFKQKQKEEQK) show a composition bias toward basic and acidic residues.

This sequence belongs to the TMA7 family.

This chain is Translation machinery-associated protein 7B, found in Homo sapiens (Human).